Consider the following 115-residue polypeptide: NADH-ubiquinone oxidoreductase chain 3 (115 aa).

3 helical membrane passes run 3-23, 55-75, and 84-104; these read FVLI…ITFW, FFLV…LLPL, and LPLM…SLAY.

The protein belongs to the complex I subunit 3 family. As to quaternary structure, core subunit of respiratory chain NADH dehydrogenase (Complex I) which is composed of 45 different subunits. Interacts with TMEM186. Interacts with TMEM242.

It localises to the mitochondrion inner membrane. It carries out the reaction a ubiquinone + NADH + 5 H(+)(in) = a ubiquinol + NAD(+) + 4 H(+)(out). Core subunit of the mitochondrial membrane respiratory chain NADH dehydrogenase (Complex I) which catalyzes electron transfer from NADH through the respiratory chain, using ubiquinone as an electron acceptor. Essential for the catalytic activity of complex I. This is NADH-ubiquinone oxidoreductase chain 3 from Pan paniscus (Pygmy chimpanzee).